A 1071-amino-acid chain; its full sequence is Tricorn protease (1071 aa).

A six-bladed beta propeller region spans residues 39-310; it reads MPNLLLNPDI…EKIEKIEIGD (272 aa). The binds the substrate's C-terminus stretch occupies residues 131-132; the sequence is RR. The seven-bladed beta propeller stretch occupies residues 326 to 675; it reads AEDFSPLDGD…EDERTVETDK (350 aa). The segment at 679–745 is C-1; helical bundle; the sequence is VSSIHEEFLQ…VEMQGEYRTS (67 aa). The active-site Charge relay system is His746. Residues 761 to 855 form a PDZ-like region; sequence RSGRIACDFK…DLMIDILDDD (95 aa). A C-2; alpha-beta sandwich region spans residues 856 to 1061; that stretch reads RFIRYRSWVE…IDALIEELRN (206 aa). 916-918 is a binding site for substrate; it reads GGG. Catalysis depends on Ser965, which acts as the Nucleophile. Residue 993–995 participates in substrate binding; that stretch reads GIT. Residue Glu1023 is the Charge relay system of the active site.

It belongs to the peptidase S41B family. As to quaternary structure, part of the Tricorn proteolytic complex. Assembles to form a hexameric toroid, 20 copies of which may then assemble to form an icosahedral supermolecule of 14.6 MDa.

Its subcellular location is the cytoplasm. In terms of biological role, tricorn degrades oligopeptides (probably derived from the proteasome) and channels the products to F1, F2 and F3 proteases, which then catalyze the terminal degradation step, yielding free amino acids. This Thermoplasma acidophilum (strain ATCC 25905 / DSM 1728 / JCM 9062 / NBRC 15155 / AMRC-C165) protein is Tricorn protease (tri).